Reading from the N-terminus, the 145-residue chain is Thioredoxin C-3 (145 aa).

Residues Cys-25, Cys-28, and His-29 each contribute to the heme site. Positions 29 to 140 constitute a Thioredoxin domain; that stretch reads HQALLPLEPI…LQQWLDQQLQ (112 aa). A disulfide bridge connects residues Cys-65 and Cys-68.

It belongs to the thioredoxin family.

Functionally, participates in various redox reactions through the reversible oxidation of its active center dithiol to a disulfide and catalyzes dithiol-disulfide exchange reactions. In Corynebacterium nephridii, this protein is Thioredoxin C-3.